Consider the following 456-residue polypeptide: Ammonium transporter Amt2 (456 aa).

A run of 11 helical transmembrane segments spans residues 18–38 (LVWV…FAML), 61–81 (IGVI…AGLT), 109–129 (WLFG…AVAG), 141–161 (ILIA…GGFL), 170–190 (AGGM…AWII), 211–231 (ITFA…FNVG), 255–275 (VALV…GVAF), 281–301 (VDTL…TAIA), 304–324 (IVWP…PIVF), 339–359 (VFPV…VFAV), and 377–397 (VGVG…FGGF).

Belongs to the ammonia transporter channel (TC 1.A.11.2) family. Homotrimer. Interacts with both GlnK1 and GlnK2 after ammonium shock.

It localises to the cell membrane. Functionally, involved in the uptake of ammonium/ammonia (NH(4)(+)/NH(3)). Transport is electrogenic. This is Ammonium transporter Amt2 from Haloferax mediterranei (strain ATCC 33500 / DSM 1411 / JCM 8866 / NBRC 14739 / NCIMB 2177 / R-4) (Halobacterium mediterranei).